The chain runs to 227 residues: Cell wall mannoprotein CIS3 (227 aa).

The signal sequence occupies residues 1-21; it reads MQFKNVALAASVAALSATASA. Residues 22–64 constitute a propeptide that is removed on maturation; sequence EGYTPGEPWSTLTPTGSISCGAAEYTTTFGIAVQAITSSKAKR. The stretch at 65–78 is one PIR1/2/3 repeat; that stretch reads DVISQIGDGQVQAT. A glycan (O-linked (Man) serine) is linked at Ser-68. Thr-78 is a glycosylation site (O-linked (Man) threonine). The span at 83 to 124 shows a compositional bias: low complexity; it reads AQATDSQAQATTTATPTSSEKISSSASKTSTNATSSSCATPS. The disordered stretch occupies residues 83-127; it reads AQATDSQAQATTTATPTSSEKISSSASKTSTNATSSSCATPSLKD. O-linked (Man) serine glycosylation is found at Ser-105, Ser-106, Ser-107, and Ser-109. Thr-111 carries O-linked (Man) threonine glycosylation. O-linked (Man) serine glycosylation occurs at Ser-112. O-linked (Man) threonine glycosylation occurs at Thr-113. A glycan (N-linked (GlcNAc...) asparagine) is linked at Asn-114. Thr-116 is a glycosylation site (O-linked (Man) threonine). O-linked (Man) serine glycosylation is found at Ser-117 and Ser-118.

It belongs to the PIR protein family. Covalently linked to beta-1,3-glucan of the inner cell wall layer via an alkali-sensitive ester linkage between the gamma-carboxyl group of glutamic acid, arising from Gln-74 within the PIR1/2/3 repeat, and hydroxyl groups of glucoses of beta-1,3-glucan chains. In terms of processing, extensively O-mannosylated. Also N-glycosylated.

The protein localises to the secreted. It localises to the cell wall. In terms of biological role, component of the outer cell wall layer. Required for stability of the cell wall and for optimal growth. Required for resistance against several antifungal and cell wall-perturbing agents. The protein is Cell wall mannoprotein CIS3 (CIS3) of Saccharomyces cerevisiae (strain ATCC 204508 / S288c) (Baker's yeast).